A 198-amino-acid chain; its full sequence is tRNA (pseudouridine(54)-N(1))-methyltransferase (198 aa).

Residues Leu130, Gly153, 176 to 181, and Cys186 contribute to the S-adenosyl-L-methionine site; that span reads LSPLEL.

This sequence belongs to the methyltransferase superfamily. TrmY family. As to quaternary structure, homodimer.

It localises to the cytoplasm. The catalysed reaction is pseudouridine(54) in tRNA + S-adenosyl-L-methionine = N(1)-methylpseudouridine(54) in tRNA + S-adenosyl-L-homocysteine + H(+). Its function is as follows. Specifically catalyzes the N1-methylation of pseudouridine at position 54 (Psi54) in tRNAs. The chain is tRNA (pseudouridine(54)-N(1))-methyltransferase from Methanococcus maripaludis (strain C7 / ATCC BAA-1331).